The following is a 110-amino-acid chain: MRVALVFLVLSILAATHGDTNLDMERKEADESSLSEMKEMLLLQELQAVEAALFGKMNVENDENRDFREKRCGGYGMSCKSVQDCCGELDCRKDPSTWIDHPYCLNPKKG.

A signal peptide spans M1–G18. 3 cysteine pairs are disulfide-bonded: C72–C86, C79–C91, and C85–C104.

In terms of tissue distribution, expressed by the venom gland.

Its subcellular location is the secreted. In terms of biological role, probable ion channel inhibitor. The sequence is that of U12-hexatoxin-Hi1a from Hadronyche infensa (Fraser island funnel-web spider).